An 883-amino-acid polypeptide reads, in one-letter code: Pyruvate, phosphate dikinase 2 (883 aa).

A disordered region spans residues 1 to 21; that stretch reads MAPAPCGRSSQRVFHFGKGKS. H465 functions as the Tele-phosphohistidine intermediate in the catalytic mechanism. Substrate-binding residues include R571, R628, E757, G778, T779, N780, and D781. E757 is a binding site for Mg(2+). Position 781 (D781) interacts with Mg(2+). Residue C843 is the Proton donor of the active site.

The protein belongs to the PEP-utilizing enzyme family. Mg(2+) is required as a cofactor. In terms of tissue distribution, expressed in leaves, roots and stems.

It is found in the cytoplasm. It catalyses the reaction pyruvate + phosphate + ATP = phosphoenolpyruvate + AMP + diphosphate + H(+). Functionally, formation of phosphoenolpyruvate, which is the primary acceptor of CO(2) in C4 and some Crassulacean acid metabolism plants. The chain is Pyruvate, phosphate dikinase 2 from Zea mays (Maize).